A 377-amino-acid polypeptide reads, in one-letter code: GTP 3',8-cyclase (377 aa).

Residues 1–29 form a disordered region; the sequence is MTTRLYLSPTPPRNDREGASKSTSASIKH. The Radical SAM core domain maps to 45–271; the sequence is RFGRIARDLR…FTLSPAKEPR (227 aa). Arginine 54 is a binding site for GTP. [4Fe-4S] cluster is bound by residues cysteine 61 and cysteine 65. Position 67 (tyrosine 67) interacts with S-adenosyl-L-methionine. Residue cysteine 68 coordinates [4Fe-4S] cluster. Residue arginine 105 participates in GTP binding. Glycine 109 contacts S-adenosyl-L-methionine. Position 140 (threonine 140) interacts with GTP. Serine 164 is a binding site for S-adenosyl-L-methionine. Lysine 201 is a GTP binding site. Methionine 235 lines the S-adenosyl-L-methionine pocket. [4Fe-4S] cluster-binding residues include cysteine 304 and cysteine 307. 309–311 contacts GTP; the sequence is RSR. Cysteine 321 contributes to the [4Fe-4S] cluster binding site.

The protein belongs to the radical SAM superfamily. MoaA family. Monomer and homodimer. The cofactor is [4Fe-4S] cluster.

It catalyses the reaction GTP + AH2 + S-adenosyl-L-methionine = (8S)-3',8-cyclo-7,8-dihydroguanosine 5'-triphosphate + 5'-deoxyadenosine + L-methionine + A + H(+). The protein operates within cofactor biosynthesis; molybdopterin biosynthesis. In terms of biological role, catalyzes the cyclization of GTP to (8S)-3',8-cyclo-7,8-dihydroguanosine 5'-triphosphate. This chain is GTP 3',8-cyclase, found in Corynebacterium glutamicum (strain ATCC 13032 / DSM 20300 / JCM 1318 / BCRC 11384 / CCUG 27702 / LMG 3730 / NBRC 12168 / NCIMB 10025 / NRRL B-2784 / 534).